The following is an 85-amino-acid chain: Large ribosomal subunit protein bL27 (85 aa).

The interval 1–20 is disordered; the sequence is MAHKKAGGSTRNGRDSEAKR.

This sequence belongs to the bacterial ribosomal protein bL27 family.

The protein is Large ribosomal subunit protein bL27 of Enterobacter sp. (strain 638).